Consider the following 251-residue polypeptide: DNA-directed RNA polymerase I subunit rpa34 (251 aa).

Disordered stretches follow at residues 1-66 (MAKS…VLTT) and 163-251 (PLVP…KEKN). Positions 8 to 17 (VNEESSEDES) are enriched in acidic residues. Phosphoserine is present on S13. Residues 23–32 (EDQHSSKEPE) are compositionally biased toward basic and acidic residues. The span at 34 to 46 (SVESNNHGESNAQ) shows a compositional bias: polar residues. Composition is skewed to basic and acidic residues over residues 190–201 (AEPKSGIKEHIL) and 212–237 (LQNKGKEKQKELKKGKREKKDEEEKP). Basic residues predominate over residues 238–251 (KKKKQKKSSKKEKN).

Belongs to the eukaryotic RPA34 RNA polymerase subunit family. In terms of assembly, component of the RNA polymerase I (Pol I) complex.

The protein resides in the nucleus. Its subcellular location is the nucleolus. Its function is as follows. DNA-dependent RNA polymerase catalyzes the transcription of DNA into RNA using the four ribonucleoside triphosphates as substrates. Component of RNA polymerase I which synthesizes ribosomal RNA precursors. The polypeptide is DNA-directed RNA polymerase I subunit rpa34 (rpa34) (Schizosaccharomyces pombe (strain 972 / ATCC 24843) (Fission yeast)).